The primary structure comprises 392 residues: Iron-sulfur cluster assembly SufBD family protein ML0594 (392 aa).

The protein belongs to the iron-sulfur cluster assembly SufBD family.

The chain is Iron-sulfur cluster assembly SufBD family protein ML0594 from Mycobacterium leprae (strain TN).